Here is a 129-residue protein sequence, read N- to C-terminus: Small ribosomal subunit protein uS8 (129 aa).

It belongs to the universal ribosomal protein uS8 family. In terms of assembly, part of the 30S ribosomal subunit. Contacts proteins S5 and S12.

Functionally, one of the primary rRNA binding proteins, it binds directly to 16S rRNA central domain where it helps coordinate assembly of the platform of the 30S subunit. The sequence is that of Small ribosomal subunit protein uS8 from Mycoplasma mycoides subsp. mycoides SC (strain CCUG 32753 / NCTC 10114 / PG1).